We begin with the raw amino-acid sequence, 327 residues long: Annexin A8 (327 aa).

Annexin repeat units follow at residues 21–92 (FNPV…ALMY), 93–164 (PPYR…CLLQ), 177–249 (GLAL…TIVK), and 253–324 (NLHC…SLVG). M266, G268, G270, and D310 together coordinate Ca(2+).

Belongs to the annexin family.

Functionally, this protein is an anticoagulant protein that acts as an indirect inhibitor of the thromboplastin-specific complex, which is involved in the blood coagulation cascade. The sequence is that of Annexin A8 (ANXA8) from Oryctolagus cuniculus (Rabbit).